Reading from the N-terminus, the 354-residue chain is G protein alpha o subunit (354 aa).

Gly-2 carries the N-myristoyl glycine lipid modification. Cys-3 carries S-palmitoyl cysteine lipidation. A G-alpha domain is found at 32–354 (KDIKLLLLGA…ANNLRGCGLY (323 aa)). The tract at residues 35 to 48 (KLLLLGAGESGKST) is G1 motif. GTP contacts are provided by residues 40 to 47 (GAGESGKS), 176 to 182 (LRTRVKT), 201 to 205 (DVGGQ), 270 to 273 (NKKD), and Ala-326. Mg(2+) is bound by residues Ser-47 and Thr-182. Residues 174 to 182 (DILRTRVKT) are G2 motif. A G3 motif region spans residues 197 to 206 (FKLFDVGGQR). The G4 motif stretch occupies residues 266 to 273 (ILFLNKKD). Residues 324–329 (TCATDT) form a G5 motif region.

The protein belongs to the G-alpha family. G(i/o/t/z) subfamily. As to quaternary structure, g proteins are composed of 3 units; alpha, beta and gamma. The alpha chain contains the guanine nucleotide binding site. As to expression, expressed primarily in neuronal cell bodies in the brain, optic lobe, and thoracic and abdominal ganglia. Also expressed in antenna, oocytes and ovarian nurse cells.

In terms of biological role, guanine nucleotide-binding proteins (G proteins) are involved as modulators or transducers in various transmembrane signaling systems. Plays a role in glial cell differentiation during embryogenesis; loco, Galphai and the G-protein coupled receptor, moody, are required in the surface glia to achieve effective insulation of the nerve cord. This Drosophila melanogaster (Fruit fly) protein is G protein alpha o subunit (Galphao).